Reading from the N-terminus, the 292-residue chain is Protein SETSIP (292 aa).

Residues 1-11 are compositionally biased toward low complexity; sequence MAPKRQSPLPL. Disordered stretches follow at residues 1–43 and 158–292; these read MAPK…EQQE and LNES…GEDD. Residues 35 to 78 adopt a coiled-coil conformation; the sequence is KKGEKEQQEAIEHIDEVQNEIDRLNEQDSEEILKVEQKYNKLRQ. Over residues 237–292 the composition is skewed to acidic residues; that stretch reads DMDDEEGGEDDDDDDDDGDEGEEELEDIDEGDEDEGEEDEDDDEGEEGEEDEGEDD.

It belongs to the nucleosome assembly protein (NAP) family. As to expression, expressed in endothelial cell (EC) and protein-induced pluripotent stem (PiPS) endothelial cell (EC) (at protein level).

Its subcellular location is the cytoplasm. The protein resides in the nucleus. Functionally, plays a role as a transcriptional activator involved in the early stage of somatic cell reprogramming. Promotes the differentiation of protein-induced pluripotent stem (PiPS) cells into endothelial cells and the formation of vascular-like tubes (in vitro). Involved in the transcription induction of vascular endothelial-cadherin (VE-cadherin) expression. Associates to the VE-cadherin gene promoter. The polypeptide is Protein SETSIP (SETSIP) (Homo sapiens (Human)).